We begin with the raw amino-acid sequence, 412 residues long: Serine--tRNA ligase (412 aa).

T228 to E230 is a binding site for L-serine. R259–E261 lines the ATP pocket. E282 contributes to the L-serine binding site. Residue E346 to S349 participates in ATP binding. S380 is a binding site for L-serine.

This sequence belongs to the class-II aminoacyl-tRNA synthetase family. Type-1 seryl-tRNA synthetase subfamily. As to quaternary structure, homodimer. The tRNA molecule binds across the dimer.

Its subcellular location is the cytoplasm. It carries out the reaction tRNA(Ser) + L-serine + ATP = L-seryl-tRNA(Ser) + AMP + diphosphate + H(+). The catalysed reaction is tRNA(Sec) + L-serine + ATP = L-seryl-tRNA(Sec) + AMP + diphosphate + H(+). The protein operates within aminoacyl-tRNA biosynthesis; selenocysteinyl-tRNA(Sec) biosynthesis; L-seryl-tRNA(Sec) from L-serine and tRNA(Sec): step 1/1. Its function is as follows. Catalyzes the attachment of serine to tRNA(Ser). Is also able to aminoacylate tRNA(Sec) with serine, to form the misacylated tRNA L-seryl-tRNA(Sec), which will be further converted into selenocysteinyl-tRNA(Sec). In Aliarcobacter butzleri (strain RM4018) (Arcobacter butzleri), this protein is Serine--tRNA ligase.